The primary structure comprises 195 residues: Ferredoxin-2, mitochondrial (195 aa).

The transit peptide at 1–61 directs the protein to the mitochondrion; that stretch reads MAAAAAVRAG…RRLRTSIGVC (61 aa). The 102-residue stretch at 81–182 folds into the 2Fe-2S ferredoxin-type domain; sequence NVVYIDRSGR…GMELTLPKVT (102 aa). C117, C123, C126, and C163 together coordinate [2Fe-2S] cluster.

This sequence belongs to the adrenodoxin/putidaredoxin family. Component of the mitochondrial core iron-sulfur cluster (ISC) complex composed of NFS1, LYRM4, NDUFAB1, ISCU, FXN, and FDX2; this complex is a heterohexamer containing two copies of each monomer. Form a heterodimer complex with NFS1. [2Fe-2S] cluster serves as cofactor.

Its subcellular location is the mitochondrion. It is found in the mitochondrion matrix. Electron donor, of the core iron-sulfur cluster (ISC) assembly complex, that acts to reduce the persulfide into sulfide during [2Fe-2S] clusters assembly on the scaffolding protein ISCU. The core iron-sulfur cluster (ISC) assembly complex is involved in the de novo synthesis of a [2Fe-2S] cluster, the first step of the mitochondrial iron-sulfur protein biogenesis. This process is initiated by the cysteine desulfurase complex (NFS1:LYRM4:NDUFAB1) that produces persulfide which is delivered on the scaffold protein ISCU in a FXN-dependent manner. Then this complex is stabilized by FDX2 which provides reducing equivalents to accomplish the [2Fe-2S] cluster assembly. Finally, the [2Fe-2S] cluster is transferred from ISCU to chaperone proteins, including HSCB, HSPA9 and GLRX5. Essential for coenzyme Q biosynthesis: together with FDXR, transfers the electrons required for the hydroxylation reaction performed by COQ6. This chain is Ferredoxin-2, mitochondrial, found in Danio rerio (Zebrafish).